Here is a 149-residue protein sequence, read N- to C-terminus: Tetracenomycin polyketide synthase protein TcmJ (149 aa).

Positions histidine 51–valine 117 constitute a Cupin type-2 domain. The tract at residues proline 127–glycine 149 is disordered.

In terms of assembly, the tetracenomycin polyketide synthase (TCM PKS) is composed of a ketosynthase complex (TcmKL), an acyl carrier protein (TcmM), a cyclase (TcmN) and a probable second cyclase (TcmJ).

The catalysed reaction is 10 malonyl-CoA + 8 H(+) = tetracenomycin F2 + 10 CO2 + 10 CoA + 2 H2O. It participates in antibiotic biosynthesis; tetracenomycin C biosynthesis. Functionally, involved in the biosynthesis of tetracenomycin C (TCM C). Part of a type II polyketide synthase (PKS) that catalyzes the synthesis of tetracenomycin F2 (TCM F2), a precursor of TCM C, from malonyl-CoA. TcmJ, while not absolutely required, greatly increases the tetracenomycin F2 production. It probably acts as a cyclase. The polypeptide is Tetracenomycin polyketide synthase protein TcmJ (Streptomyces glaucescens).